Consider the following 145-residue polypeptide: Peptide methionine sulfoxide reductase MsrB (145 aa).

The MsrB domain maps to 6 to 129 (KNERLQQLTD…NSAALRFIPV (124 aa)). C118 (nucleophile) is an active-site residue.

This sequence belongs to the MsrB Met sulfoxide reductase family.

It carries out the reaction L-methionyl-[protein] + [thioredoxin]-disulfide + H2O = L-methionyl-(R)-S-oxide-[protein] + [thioredoxin]-dithiol. This is Peptide methionine sulfoxide reductase MsrB from Listeria monocytogenes serotype 4b (strain CLIP80459).